The sequence spans 510 residues: NAD(P)H-quinone oxidoreductase subunit 2 B, chloroplastic (510 aa).

The next 12 helical transmembrane spans lie at 24–44 (LLLFNGSFIFPECILIFGLIL), 59–79 (WFYFISSTSLVISITALLFRW), 99–119 (IFQFLILLCSTLCIPLSVEYI), 124–144 (MAITEFLLFILTATLGGMFLC), 149–169 (LITIFVAPECFSLCSYLLSGY), 183–203 (YLLMGGASSSILVHGFSWLYG), 229–249 (ISIALISITVGLGFKLSPAPF), 295–315 (WHLLLEILAILSMILGNLLAI), 323–343 (MLAYSSIGQIGYVIIGIIVGD), 354–374 (YMLFYISMNLGTFACIVLFGL), 395–415 (ALSLALCLLSLGGLPPLAGFF), and 418–438 (LYLFWCGWQAGLYFLVSIGLL).

It belongs to the complex I subunit 2 family. As to quaternary structure, NDH is composed of at least 16 different subunits, 5 of which are encoded in the nucleus.

The protein localises to the plastid. It is found in the chloroplast thylakoid membrane. The catalysed reaction is a plastoquinone + NADH + (n+1) H(+)(in) = a plastoquinol + NAD(+) + n H(+)(out). The enzyme catalyses a plastoquinone + NADPH + (n+1) H(+)(in) = a plastoquinol + NADP(+) + n H(+)(out). Functionally, NDH shuttles electrons from NAD(P)H:plastoquinone, via FMN and iron-sulfur (Fe-S) centers, to quinones in the photosynthetic chain and possibly in a chloroplast respiratory chain. The immediate electron acceptor for the enzyme in this species is believed to be plastoquinone. Couples the redox reaction to proton translocation, and thus conserves the redox energy in a proton gradient. The sequence is that of NAD(P)H-quinone oxidoreductase subunit 2 B, chloroplastic from Lolium perenne (Perennial ryegrass).